The following is a 161-amino-acid chain: Phosphopantetheine adenylyltransferase (161 aa).

A substrate-binding site is contributed by serine 9. ATP-binding positions include 9-10 and histidine 17; that span reads SF. 3 residues coordinate substrate: lysine 41, leucine 73, and lysine 87. ATP contacts are provided by residues 88–90, glutamate 98, and 123–129; these read GLR and YSYLSSS.

This sequence belongs to the bacterial CoaD family. In terms of assembly, homohexamer. Requires Mg(2+) as cofactor.

Its subcellular location is the cytoplasm. The enzyme catalyses (R)-4'-phosphopantetheine + ATP + H(+) = 3'-dephospho-CoA + diphosphate. Its pathway is cofactor biosynthesis; coenzyme A biosynthesis; CoA from (R)-pantothenate: step 4/5. In terms of biological role, reversibly transfers an adenylyl group from ATP to 4'-phosphopantetheine, yielding dephospho-CoA (dPCoA) and pyrophosphate. The protein is Phosphopantetheine adenylyltransferase of Clostridium novyi (strain NT).